The primary structure comprises 444 residues: MAGGMKVAVSPAVGPGPWGSGVGGGGTVRLLLILSGCLVYGTAETDVNVVMLQESQVCEKRASQQFCYTNVLIPKWHDIWTRIQIRVNSSRLVRVTQVENEEKLKELEQFSIWNFFSSFLKEKLNDTYVNVGLYSTKTCLKVEIIEKDTKYSVIVIRRFDPKLFLVFLLGLMLFFCGDLLSRSQIFYYSTGMTVGIVASLLIIIFILSKFMPKKSPIYVILVGGWSFSLYLIQLVFKNLQEIWRCYWQYLLSYVLTVGFMSFAVCYKYGPLENERSINLLTWTLQLMGLCFMYSGIQIPHIALAIIIIALCTKNLEHPIQWLYITCRKVCKGAEKPVPPRLLTEEEYRIQGEVETRKALEELREFCNSPDCSAWKTVSRIQSPKRFADFVEGSSHLTPNEVSVHEQEYGLGSIIAQDEIYEEASSEEEDSYSRCPAITQNNFLT.

Residues methionine 1–alanine 43 form the signal peptide. Asparagine 125 carries an N-linked (GlcNAc...) asparagine glycan. Transmembrane regions (helical) follow at residues proline 161 to serine 181, phenylalanine 186 to isoleucine 206, proline 216 to phenylalanine 236, cysteine 245 to cysteine 265, and leucine 289 to alanine 309. The a; required for its colocalization with lamins at the nuclear envelope stretch occupies residues phenylalanine 186–glutamine 297. Residues proline 336 to glutamate 405 are b; required for interaction with RAN-GTP. The required for nuclear localization stretch occupies residues proline 336–threonine 444. Phosphoserine is present on residues serine 368, serine 424, and serine 425.

The protein belongs to the NEMP family. As to quaternary structure, homooligomer. Interacts with RAN-GTP. Interacts with EMD. Post-translationally, phosphorylation may regulate its interaction with RAN-GTP.

Its subcellular location is the nucleus inner membrane. The protein localises to the nucleus envelope. In terms of biological role, together with EMD, contributes to nuclear envelope stiffness in germ cells. Required for female fertility. Essential for normal erythropoiesis. Required for efficient nuclear envelope opening and enucleation during the late stages of erythroblast maturation. The sequence is that of Nuclear envelope integral membrane protein 1 (NEMP1) from Homo sapiens (Human).